A 442-amino-acid polypeptide reads, in one-letter code: PTS system oligo-beta-mannoside-specific EIIC component (442 aa).

A PTS EIIC type-3 domain is found at 5–411 (ISQFLVPIAG…LIVFVIWFPF (407 aa)). 11 consecutive transmembrane segments (helical) span residues 28-48 (AFMLAFPLTIFGSIFVVLTNL), 67-87 (FGIASTATMGIMSVFVVFGIG), 97-117 (EAVFGGAIALVSFLLLTPFII), 138-157 (GMFLGMITAFLSGEIYRRIV), 177-197 (FAALIPAFITLTVFLLINVMV), 205-225 (MHDVIYHAIQAPLVGLGSGII), 228-248 (LIAVFFIQILWFFGLHGQIII), 286-306 (TVGMGGTGMTLAIVFTILIFM), 329-349 (PIIFGLPIVMNPIIIVPWVLA), 365-385 (LVPPPTGVTVPWTVPLFINGI), and 391-411 (IMGGVMQLINLLIVFVIWFPF).

Its subcellular location is the cell membrane. In terms of biological role, the phosphoenolpyruvate-dependent sugar phosphotransferase system (sugar PTS), a major carbohydrate active transport system, catalyzes the phosphorylation of incoming sugar substrates concomitantly with their translocation across the cell membrane. The enzyme II GmuABC PTS system is involved in the transport of oligo-glucomannans such as cellobiose or mannobiose. The protein is PTS system oligo-beta-mannoside-specific EIIC component of Bacillus subtilis (strain 168).